A 225-amino-acid chain; its full sequence is ATP-dependent dethiobiotin synthetase BioD 1 (225 aa).

The Mg(2+) site is built by Glu13 and Thr17. 13 to 18 (EVGKTV) is a binding site for ATP. Lys38 is an active-site residue. Ser42 serves as a coordination point for substrate. Mg(2+)-binding residues include Asp55 and Glu116. ATP is bound by residues Asp55, 116–119 (EGAG), and 176–177 (ND). Tyr188 provides a ligand contact to substrate. Residues 205–207 (PWL) and Glu212 contribute to the ATP site.

This sequence belongs to the dethiobiotin synthetase family. In terms of assembly, homodimer. Requires Mg(2+) as cofactor.

The protein resides in the cytoplasm. The enzyme catalyses (7R,8S)-7,8-diammoniononanoate + CO2 + ATP = (4R,5S)-dethiobiotin + ADP + phosphate + 3 H(+). Its pathway is cofactor biosynthesis; biotin biosynthesis; biotin from 7,8-diaminononanoate: step 1/2. Its function is as follows. Catalyzes a mechanistically unusual reaction, the ATP-dependent insertion of CO2 between the N7 and N8 nitrogen atoms of 7,8-diaminopelargonic acid (DAPA, also called 7,8-diammoniononanoate) to form a ureido ring. Only CTP can partially replace ATP while diaminobiotin is only 37% as effective as 7,8-diaminopelargonic acid. In another study both CTP and GTP (but not ITP, TTP or UTP) can partially replace ATP. This chain is ATP-dependent dethiobiotin synthetase BioD 1, found in Escherichia coli (strain K12).